Here is a 1156-residue protein sequence, read N- to C-terminus: Reverse gyrase 1 (1156 aa).

Residues 1–38 form an RG N-terminal-type zinc finger; sequence MLKVYYTFGCPNCGGPIDDEHLLAGVPCSKCLPGRVEN. Zn(2+) contacts are provided by cysteine 10, cysteine 13, cysteine 28, and cysteine 31. ATP contacts are provided by residues glutamine 86 and 103–110; that span reads APTGLGKT. Residues 90–277 enclose the Helicase ATP-binding domain; the sequence is IKRLAKSESF…ALRTLIGFEP (188 aa). The DEAD box motif lies at 184–187; sequence DDSD. Positions 570-1156 are topoisomerase I; the sequence is INIKTILLIV…VNSLKLDTNV (587 aa). In terms of domain architecture, Toprim spans 574–736; it reads TILLIVESPT…NIYRIKYHEI (163 aa). A Mg(2+)-binding site is contributed by glutamate 580. The segment at 655 to 682 adopts an RG C-terminal-type zinc-finger fold; it reads IYKCYNCGKTFTIKSNTCPYCGSVFISS. Zn(2+) is bound by residues cysteine 658, cysteine 661, cysteine 672, and cysteine 675. Aspartate 705 serves as a coordination point for Mg(2+). Positions 752–1143 constitute a Topo IA-type catalytic domain; that stretch reads NMNLVKSQIV…DLHKEITQIS (392 aa). Tyrosine 895 serves as the catalytic O-(5'-phospho-DNA)-tyrosine intermediate.

It in the N-terminal section; belongs to the DEAD box helicase family. DDVD subfamily. The protein in the C-terminal section; belongs to the type IA topoisomerase family. In terms of assembly, monomer. The cofactor is Zn(2+). It depends on Mg(2+) as a cofactor.

It is found in the cytoplasm. It catalyses the reaction ATP + H2O = ADP + phosphate + H(+). Its function is as follows. Modifies the topological state of DNA by introducing positive supercoils in an ATP-dependent process, increasing the linking number in steps of +1. Binds to single-stranded DNA, transiently cleaves and then rejoins the ends, introducing a positive supercoil in the process. The scissile phosphodiester is attacked by the catalytic tyrosine of the enzyme, resulting in the formation of a DNA-(5'-phosphotyrosyl)-enzyme intermediate. Probably involved in rewinding DNA strands in regions of the chromosome that have opened up to allow replication, transcription, DNA repair and/or for DNA protection. The sequence is that of Reverse gyrase 1 from Sulfurisphaera tokodaii (strain DSM 16993 / JCM 10545 / NBRC 100140 / 7) (Sulfolobus tokodaii).